The sequence spans 782 residues: E3 ubiquitin-protein ligase SopA (782 aa).

Catalysis depends on C753, which acts as the Glycyl thioester intermediate.

It belongs to the SopA E3 ligase family. Ubiquitinated in the presence of host E1 ubiquitin-activating enzyme, E2 ubiquitin-conjugating enzyme and ubiquitin.

The protein resides in the secreted. It is found in the host cell. It catalyses the reaction S-ubiquitinyl-[E2 ubiquitin-conjugating enzyme]-L-cysteine + [acceptor protein]-L-lysine = [E2 ubiquitin-conjugating enzyme]-L-cysteine + N(6)-ubiquitinyl-[acceptor protein]-L-lysine.. Functionally, effector proteins function to alter host cell physiology and promote bacterial survival in host tissues. This protein is an E3 ubiquitin ligase that interferes with host's ubiquitination pathway. In Salmonella choleraesuis (strain SC-B67), this protein is E3 ubiquitin-protein ligase SopA (sopA).